The sequence spans 675 residues: Potassium-transporting ATPase ATP-binding subunit (675 aa).

Transmembrane regions (helical) follow at residues 38–58 (VMFV…ANLV), 67–87 (LAIT…EGMA), 216–236 (IALS…VVTL), and 253–273 (IALL…AIGI). Aspartate 304 acts as the 4-aspartylphosphate intermediate in catalysis. Residues aspartate 341, glutamate 345, 371–378 (FTAQTRMS), and lysine 389 contribute to the ATP site. 2 residues coordinate Mg(2+): aspartate 512 and aspartate 516. The next 3 membrane-spanning stretches (helical) occupy residues 582–602 (FAIL…LNVM), 610–630 (AVLS…PLAL), and 654–674 (GGIL…GGLM).

The protein belongs to the cation transport ATPase (P-type) (TC 3.A.3) family. Type IA subfamily. As to quaternary structure, the system is composed of three essential subunits: KdpA, KdpB and KdpC.

The protein resides in the cell membrane. It catalyses the reaction K(+)(out) + ATP + H2O = K(+)(in) + ADP + phosphate + H(+). Its function is as follows. Part of the high-affinity ATP-driven potassium transport (or Kdp) system, which catalyzes the hydrolysis of ATP coupled with the electrogenic transport of potassium into the cytoplasm. This subunit is responsible for energy coupling to the transport system and for the release of the potassium ions to the cytoplasm. In Deinococcus radiodurans (strain ATCC 13939 / DSM 20539 / JCM 16871 / CCUG 27074 / LMG 4051 / NBRC 15346 / NCIMB 9279 / VKM B-1422 / R1), this protein is Potassium-transporting ATPase ATP-binding subunit.